Here is a 1061-residue protein sequence, read N- to C-terminus: Isoleucine--tRNA ligase (1061 aa).

The short motif at 50–60 (PYTSGSAHMGT) is the 'HIGH' region element. The 'KMSKS' region motif lies at 604–608 (KMSKS). Residue K607 participates in ATP binding.

It belongs to the class-I aminoacyl-tRNA synthetase family. IleS type 2 subfamily. Monomer. The cofactor is Zn(2+).

The protein resides in the cytoplasm. It carries out the reaction tRNA(Ile) + L-isoleucine + ATP = L-isoleucyl-tRNA(Ile) + AMP + diphosphate. Its function is as follows. Catalyzes the attachment of isoleucine to tRNA(Ile). As IleRS can inadvertently accommodate and process structurally similar amino acids such as valine, to avoid such errors it has two additional distinct tRNA(Ile)-dependent editing activities. One activity is designated as 'pretransfer' editing and involves the hydrolysis of activated Val-AMP. The other activity is designated 'posttransfer' editing and involves deacylation of mischarged Val-tRNA(Ile). The chain is Isoleucine--tRNA ligase from Natronomonas pharaonis (strain ATCC 35678 / DSM 2160 / CIP 103997 / JCM 8858 / NBRC 14720 / NCIMB 2260 / Gabara) (Halobacterium pharaonis).